A 764-amino-acid chain; its full sequence is DNA replication regulator DPB11 (764 aa).

BRCT domains follow at residues 1–99, 129–220, and 322–418; these read MKPF…MTGS, TNIT…PYYL, and NSTL…DLWS. Disordered stretches follow at residues 651 to 675 and 710 to 764; these read ETDS…RQMP and TEQP…ELDS. Residues 739-751 are compositionally biased toward basic and acidic residues; the sequence is QDKKRTASLEKPM.

As to quaternary structure, interacts with SLD2.

The protein resides in the nucleus. Functionally, has a role in the initiation of DNA replication. Required at S-phase checkpoint. Required for the association of PSF1 with origins. Also required for the proper activation of RAD53 in response to DNA damage and replication blocks. Multicopy suppressor of DPB2 mutation. Overexpression restores the growth defect conferred by POL2 mutation. This chain is DNA replication regulator DPB11 (DPB11), found in Saccharomyces cerevisiae (strain ATCC 204508 / S288c) (Baker's yeast).